A 167-amino-acid polypeptide reads, in one-letter code: ATP synthase subunit b (167 aa).

Residues 7–25 traverse the membrane as a helical segment; it reads SFLLAVSFVIFIYLIYRPA.

This sequence belongs to the ATPase B chain family. In terms of assembly, F-type ATPases have 2 components, F(1) - the catalytic core - and F(0) - the membrane proton channel. F(1) has five subunits: alpha(3), beta(3), gamma(1), delta(1), epsilon(1). F(0) has three main subunits: a(1), b(2) and c(10-14). The alpha and beta chains form an alternating ring which encloses part of the gamma chain. F(1) is attached to F(0) by a central stalk formed by the gamma and epsilon chains, while a peripheral stalk is formed by the delta and b chains.

The protein resides in the cell inner membrane. F(1)F(0) ATP synthase produces ATP from ADP in the presence of a proton or sodium gradient. F-type ATPases consist of two structural domains, F(1) containing the extramembraneous catalytic core and F(0) containing the membrane proton channel, linked together by a central stalk and a peripheral stalk. During catalysis, ATP synthesis in the catalytic domain of F(1) is coupled via a rotary mechanism of the central stalk subunits to proton translocation. In terms of biological role, component of the F(0) channel, it forms part of the peripheral stalk, linking F(1) to F(0). This is ATP synthase subunit b from Rickettsia typhi (strain ATCC VR-144 / Wilmington).